The primary structure comprises 103 residues: Small ribosomal subunit protein uS10 (103 aa).

The protein belongs to the universal ribosomal protein uS10 family. Part of the 30S ribosomal subunit.

Involved in the binding of tRNA to the ribosomes. This chain is Small ribosomal subunit protein uS10, found in Alkalilimnicola ehrlichii (strain ATCC BAA-1101 / DSM 17681 / MLHE-1).